An 81-amino-acid chain; its full sequence is Photosystem I iron-sulfur center (81 aa).

4Fe-4S ferredoxin-type domains lie at 2–31 (AHSVKIYDTCIGCTQCVRACPTDVLEMIPW) and 39–68 (IASAPRTEDCVGCKRCESACPTDFLSVRVY). 8 residues coordinate [4Fe-4S] cluster: C11, C14, C17, C21, C48, C51, C54, and C58.

In terms of assembly, the eukaryotic PSI reaction center is composed of at least 11 subunits. It depends on [4Fe-4S] cluster as a cofactor.

The protein localises to the plastid. It localises to the chloroplast thylakoid membrane. It carries out the reaction reduced [plastocyanin] + hnu + oxidized [2Fe-2S]-[ferredoxin] = oxidized [plastocyanin] + reduced [2Fe-2S]-[ferredoxin]. Its function is as follows. Apoprotein for the two 4Fe-4S centers FA and FB of photosystem I (PSI); essential for photochemical activity. FB is the terminal electron acceptor of PSI, donating electrons to ferredoxin. The C-terminus interacts with PsaA/B/D and helps assemble the protein into the PSI complex. Required for binding of PsaD and PsaE to PSI. PSI is a plastocyanin-ferredoxin oxidoreductase, converting photonic excitation into a charge separation, which transfers an electron from the donor P700 chlorophyll pair to the spectroscopically characterized acceptors A0, A1, FX, FA and FB in turn. The chain is Photosystem I iron-sulfur center from Zygnema circumcarinatum (Green alga).